We begin with the raw amino-acid sequence, 500 residues long: Serine carboxypeptidase 3 (500 aa).

The N-terminal stretch at 1–21 (MATTPRLASLLLLLALCAAAA) is a signal peptide. A propeptide spanning residues 22-73 (GALRLPPDASFPGAQAERLIRALNLLPGRPRRGLGAGAEDVAPGQLLERRVT) is cleaved from the precursor. Disulfide bonds link Cys126-Cys366, Cys294-Cys309, and Cys332-Cys337. Asn144 carries N-linked (GlcNAc...) asparagine glycosylation. Ser216 is a catalytic residue. Asp404 is an active-site residue. Substrate is bound at residue Cys407. His461 is a catalytic residue. Positions 485-500 (ESVPEEEPATTFYAAI) are excised as a propeptide.

It belongs to the peptidase S10 family. As to quaternary structure, monomer.

The enzyme catalyses Release of a C-terminal amino acid with broad specificity.. The sequence is that of Serine carboxypeptidase 3 (CBP3) from Triticum aestivum (Wheat).